A 314-amino-acid polypeptide reads, in one-letter code: Small glutamine-rich tetratricopeptide repeat-containing protein alpha (314 aa).

A disordered region spans residues 65–99 (ATASKEMPQDPRGPDRTPPSEEDSAEAERLKTEGN). The span at 71 to 83 (MPQDPRGPDRTPP) shows a compositional bias: basic and acidic residues. T81 carries the phosphothreonine modification. S84 is subject to Phosphoserine. Basic and acidic residues predominate over residues 90–99 (EAERLKTEGN). 3 TPR repeats span residues 91 to 124 (AERLKTEGNEQMKLENFEAAVHLYGKAIELNPAN), 125 to 158 (AVYFCNRAAAYSKLGNYVGAVQDCERAIGIDPGY), and 159 to 192 (SKAYGRMGLALSSLNKHAEAVAYYKKALELDPDN). Residue K137 is modified to N6-acetyllysine. The segment at 249–268 (GMISGGHNPLGTPGSSPQHS) is disordered. At S302 the chain carries Phosphoserine. T304 bears the Phosphothreonine mark. S306 carries the phosphoserine modification.

Belongs to the SGT family. As to quaternary structure, homodimer. Homooligomer. Interacts with DNAJC5 and DNAJC5B. Interacts (via TPR repeats) with HSP90AA1. Interacts (via Gln-rich region) with SLC2A1. Interacts with HSP90AB1. Interacts (via TPR repeats) with HSPA8/Hsc70; the interaction is direct. Interacts with BAG6 (via ubiquitin-like domain); interaction prevents interaction between BAG6 and RNF126. Forms a multiprotein complex, at least composed of DNAJB12, DNAJB14, HSPA8/Hsc70 and SGTA; interaction with DNAJB14 and HSPA8/Hsc70 is direct. In terms of assembly, (Microbial infection) Interacts with NS1 from parvovirus H-1. In terms of tissue distribution, ubiquitously expressed.

It localises to the cytoplasm. It is found in the nucleus. Functionally, co-chaperone that binds misfolded and hydrophobic patches-containing client proteins in the cytosol. Mediates their targeting to the endoplasmic reticulum but also regulates their sorting to the proteasome when targeting fails. Functions in tail-anchored/type II transmembrane proteins membrane insertion constituting with ASNA1 and the BAG6 complex a targeting module. Functions upstream of the BAG6 complex and ASNA1, binding more rapidly the transmembrane domain of newly synthesized proteins. It is also involved in the regulation of the endoplasmic reticulum-associated misfolded protein catabolic process via its interaction with BAG6: collaborates with the BAG6 complex to maintain hydrophobic substrates in non-ubiquitinated states. Competes with RNF126 for interaction with BAG6, preventing the ubiquitination of client proteins associated with the BAG6 complex. Binds directly to HSC70 and HSP70 and regulates their ATPase activity. In Rattus norvegicus (Rat), this protein is Small glutamine-rich tetratricopeptide repeat-containing protein alpha (Sgta).